The primary structure comprises 121 residues: Small ribosomal subunit protein uS13 (121 aa).

A disordered region spans residues 91–121 (HRRGLPVRGQNSKNNARTRKGPRRTVANKKK). Residues 106-121 (ARTRKGPRRTVANKKK) are compositionally biased toward basic residues.

Belongs to the universal ribosomal protein uS13 family. Part of the 30S ribosomal subunit. Forms a loose heterodimer with protein S19. Forms two bridges to the 50S subunit in the 70S ribosome.

Functionally, located at the top of the head of the 30S subunit, it contacts several helices of the 16S rRNA. In the 70S ribosome it contacts the 23S rRNA (bridge B1a) and protein L5 of the 50S subunit (bridge B1b), connecting the 2 subunits; these bridges are implicated in subunit movement. Contacts the tRNAs in the A and P-sites. The chain is Small ribosomal subunit protein uS13 from Bacillus cereus (strain G9842).